The chain runs to 234 residues: Large ribosomal subunit protein uL1 (234 aa).

Belongs to the universal ribosomal protein uL1 family. Part of the 50S ribosomal subunit.

Functionally, binds directly to 23S rRNA. The L1 stalk is quite mobile in the ribosome, and is involved in E site tRNA release. Protein L1 is also a translational repressor protein, it controls the translation of the L11 operon by binding to its mRNA. This Campylobacter fetus subsp. fetus (strain 82-40) protein is Large ribosomal subunit protein uL1.